The following is a 286-amino-acid chain: CLA biosynthesis dehydrogenase/reductase (286 aa).

6 residues coordinate NAD(+): Asp-37, Asp-63, Val-64, Asn-90, Tyr-156, and Lys-160. The Proton acceptor role is filled by Tyr-156.

Belongs to the short-chain dehydrogenases/reductases (SDR) family.

The protein resides in the cytoplasm. The enzyme catalyses (10S)-hydroxy-(12Z)-octadecenoate + NAD(+) = 10-oxo-(12Z)-octadecenoate + NADH + H(+). The catalysed reaction is 10-oxo-(11E)-octadecenoate + NADH + H(+) = 10-hydroxy-(11E)-octadecenoate + NAD(+). It carries out the reaction 10-oxooctadecanoate + NADH + H(+) = 10-hydroxyoctadecanoate + NAD(+). It participates in lipid metabolism; fatty acid metabolism. Functionally, is involved in a saturation metabolic pathway of polyunsaturated fatty acids, that detoxifies unsaturated fatty acids and generates hydroxy fatty acids, oxo fatty acids, conjugated fatty acids such as conjugated linoleic acids (CLAs), and partially saturated trans-fatty acids as intermediates. CLA-DH catalyzes the dehydrogenation/reduction steps in the production of 10-oxo-(12Z)-octadecenoate, 10-hydroxy-(11E)-octadecenoate and 10-hydroxyoctadecanoate during linoleate metabolism. As part of the gut microbiome, this enzyme modifies host fatty acid composition and is expected to improve human health by altering lipid metabolism related to the onset of metabolic syndrome. The chain is CLA biosynthesis dehydrogenase/reductase from Lactiplantibacillus plantarum (Lactobacillus plantarum).